The following is a 238-amino-acid chain: Tritrans,polycis-undecaprenyl-diphosphate synthase (geranylgeranyl-diphosphate specific) (238 aa).

Residue Asp-18 is part of the active site. Position 18 (Asp-18) interacts with Mg(2+). Residues 19 to 22 (GNRR) and 64 to 66 (STE) each bind substrate. Asn-67 functions as the Proton acceptor in the catalytic mechanism. Residues Arg-70, Arg-187, and 193-195 (RLS) each bind substrate. Residue Glu-206 participates in Mg(2+) binding.

This sequence belongs to the UPP synthase family. Homodimer. The cofactor is Mg(2+).

It catalyses the reaction geranylgeranyl diphosphate + 7 isopentenyl diphosphate = tri-trans,hepta-cis-undecaprenyl diphosphate + 7 diphosphate. Catalyzes the sequential condensation of isopentenyl diphosphate (IPP) with geranylgeranyl diphosphate (GGPP) to yield (2Z,6Z,10Z,14Z,18Z,22Z,26Z,30E,34E,38E)-undecaprenyl diphosphate (tritrans,heptacis-UPP). It is probably the precursor of glycosyl carrier lipids. This chain is Tritrans,polycis-undecaprenyl-diphosphate synthase (geranylgeranyl-diphosphate specific), found in Pyrobaculum aerophilum (strain ATCC 51768 / DSM 7523 / JCM 9630 / CIP 104966 / NBRC 100827 / IM2).